The chain runs to 99 residues: DASH complex subunit DAD1 (99 aa).

The tract at residues 69–99 is disordered; the sequence is GMNHQTRENTRDENNKISSSDTEDENNNNKI. Positions 73–83 are enriched in basic and acidic residues; sequence QTRENTRDENN. Residues 89 to 99 are compositionally biased toward acidic residues; sequence DTEDENNNNKI.

This sequence belongs to the DASH complex DAD1 family. In terms of assembly, component of the DASH complex consisting of ASK1, DAD1, DAD2, DAD3, DAD4, DAM1, DUO1, HSK3, SPC19 and SPC34, with a stoichiometry of one copy of each subunit per complex. Multiple DASH complexes oligomerize to form a ring that encircles spindle microtubules and organizes the rod-like NDC80 complexes of the outer kinetochore. DASH complex oligomerization strengthens microtubule attachments. On cytoplasmic microtubules, DASH complexes appear to form patches instead of rings.

The protein localises to the chromosome. It localises to the centromere. It is found in the kinetochore. Its subcellular location is the cytoplasm. The protein resides in the cytoskeleton. The protein localises to the spindle. It localises to the nucleus. In terms of biological role, component of the DASH complex that connects microtubules with kinetochores and couples microtubule depolymerisation to chromosome movement; it is involved in retrieving kinetochores to the spindle poles before their re-orientation on the spindle in early mitosis and allows microtubule depolymerization to pull chromosomes apart and resist detachment during anaphase. Kinetochores, consisting of a centromere-associated inner segment and a microtubule-contacting outer segment, play a crucial role in chromosome segregation by mediating the physical connection between centromeric DNA and microtubules. Kinetochores also serve as an input point for the spindle assembly checkpoint, which delays anaphase until all chromosomes have bioriented on the mitotic spindle. This chain is DASH complex subunit DAD1, found in Candida albicans (strain SC5314 / ATCC MYA-2876) (Yeast).